A 148-amino-acid polypeptide reads, in one-letter code: Glutamyl-tRNA(Gln) amidotransferase subunit C, mitochondrial (148 aa).

This sequence belongs to the GatC family. Subunit of the heterotrimeric GatCAB amidotransferase (AdT) complex, composed of A, B and C subunits.

It is found in the mitochondrion. It catalyses the reaction L-glutamyl-tRNA(Gln) + L-glutamine + ATP + H2O = L-glutaminyl-tRNA(Gln) + L-glutamate + ADP + phosphate + H(+). Its function is as follows. Allows the formation of correctly charged Gln-tRNA(Gln) through the transamidation of misacylated Glu-tRNA(Gln) in the mitochondria. The reaction takes place in the presence of glutamine and ATP through an activated gamma-phospho-Glu-tRNA(Gln). The chain is Glutamyl-tRNA(Gln) amidotransferase subunit C, mitochondrial from Drosophila pseudoobscura pseudoobscura (Fruit fly).